A 181-amino-acid polypeptide reads, in one-letter code: Major urinary protein 20 (181 aa).

The signal sequence occupies residues M1–A19. An intrachain disulfide couples C83 to C176.

Belongs to the calycin superfamily. Lipocalin family. Detected in urine of males but absent from female urine (at protein level).

The protein resides in the secreted. In terms of biological role, male pheromone which stimulates female sexual attraction to male urinary scent and promotes a strong learned attraction to the airborne urinary odor of an individual male. Promotes spatial learning by rapidly conditioning preference for its remembered location among females and competitor males so that animals prefer to spend time in the site even when scent is absent. In addition to promoting a rapid attraction response, also elicits ultrasonic vocalizations and urinary scent marking in females which do not occur immediately after exposure. Stimulates hippocampal neurogenesis and cell proliferation in the subventricular zone in females. Promotes male aggressive behavior. Response to Mup20 is mediated by a neural circuit extending from the accessory olfactory bulb to a subset of nitric oxidase synthase-expressing neurons in the medial amygdala. As well as acting as a pheromone itself, binds most of the male pheromone, 2-sec-butyl-4,5-dihydrothiazole, in urine and is responsible for its slow release from scent marks. This chain is Major urinary protein 20, found in Mus musculus (Mouse).